A 122-amino-acid chain; its full sequence is MSLTNEQIIEAIGQKSVMEIVELIKAMEETFGVTAAAAVAAGPAAAAPAAEEQTEFTIVLAEAGDKKVNVIKAVRELTGLGLKEAKAVVDGAPGVVKEGVSKEEAEAAKKALEEAGAKVELK.

This sequence belongs to the bacterial ribosomal protein bL12 family. As to quaternary structure, homodimer. Part of the ribosomal stalk of the 50S ribosomal subunit. Forms a multimeric L10(L12)X complex, where L10 forms an elongated spine to which 2 to 4 L12 dimers bind in a sequential fashion. Binds GTP-bound translation factors.

Its function is as follows. Forms part of the ribosomal stalk which helps the ribosome interact with GTP-bound translation factors. Is thus essential for accurate translation. This chain is Large ribosomal subunit protein bL12, found in Stutzerimonas stutzeri (strain A1501) (Pseudomonas stutzeri).